The primary structure comprises 536 residues: Putative UDP-glucuronosyltransferase ugt-47 (536 aa).

An N-terminal signal peptide occupies residues 1–21 (MFRYHSILLLAILYFFEYGLA). N-linked (GlcNAc...) asparagine glycans are attached at residues N52 and N308. Residues 497–517 (IIVPCFFVAFYFIIFPFFKLF) form a helical membrane-spanning segment.

This sequence belongs to the UDP-glycosyltransferase family.

The protein localises to the membrane. It carries out the reaction glucuronate acceptor + UDP-alpha-D-glucuronate = acceptor beta-D-glucuronoside + UDP + H(+). The chain is Putative UDP-glucuronosyltransferase ugt-47 (ugt-47) from Caenorhabditis elegans.